We begin with the raw amino-acid sequence, 379 residues long: UDP-4-amino-4-deoxy-L-arabinose--oxoglutarate aminotransferase (379 aa).

N6-(pyridoxal phosphate)lysine is present on lysine 182.

Belongs to the DegT/DnrJ/EryC1 family. ArnB subfamily. Homodimer. Requires pyridoxal 5'-phosphate as cofactor.

The enzyme catalyses UDP-4-amino-4-deoxy-beta-L-arabinose + 2-oxoglutarate = UDP-beta-L-threo-pentopyranos-4-ulose + L-glutamate. It functions in the pathway nucleotide-sugar biosynthesis; UDP-4-deoxy-4-formamido-beta-L-arabinose biosynthesis; UDP-4-deoxy-4-formamido-beta-L-arabinose from UDP-alpha-D-glucuronate: step 2/3. Its pathway is bacterial outer membrane biogenesis; lipopolysaccharide biosynthesis. Functionally, catalyzes the conversion of UDP-4-keto-arabinose (UDP-Ara4O) to UDP-4-amino-4-deoxy-L-arabinose (UDP-L-Ara4N). The modified arabinose is attached to lipid A and is required for resistance to polymyxin and cationic antimicrobial peptides. The chain is UDP-4-amino-4-deoxy-L-arabinose--oxoglutarate aminotransferase from Erwinia tasmaniensis (strain DSM 17950 / CFBP 7177 / CIP 109463 / NCPPB 4357 / Et1/99).